Consider the following 275-residue polypeptide: Light-independent protochlorophyllide reductase iron-sulfur ATP-binding protein (275 aa).

ATP contacts are provided by residues 12–17 (GIGKST) and Lys-41. Ser-16 lines the Mg(2+) pocket. Residues Cys-97 and Cys-131 each contribute to the [4Fe-4S] cluster site. 182-183 (NR) serves as a coordination point for ATP.

It belongs to the NifH/BchL/ChlL family. Homodimer. Protochlorophyllide reductase is composed of three subunits; BchL, BchN and BchB. [4Fe-4S] cluster serves as cofactor.

The enzyme catalyses chlorophyllide a + oxidized 2[4Fe-4S]-[ferredoxin] + 2 ADP + 2 phosphate = protochlorophyllide a + reduced 2[4Fe-4S]-[ferredoxin] + 2 ATP + 2 H2O. The protein operates within porphyrin-containing compound metabolism; bacteriochlorophyll biosynthesis (light-independent). In terms of biological role, component of the dark-operative protochlorophyllide reductase (DPOR) that uses Mg-ATP and reduced ferredoxin to reduce ring D of protochlorophyllide (Pchlide) to form chlorophyllide a (Chlide). This reaction is light-independent. The L component serves as a unique electron donor to the NB-component of the complex, and binds Mg-ATP. The polypeptide is Light-independent protochlorophyllide reductase iron-sulfur ATP-binding protein (Prosthecochloris aestuarii (strain DSM 271 / SK 413)).